The sequence spans 149 residues: MEIVAENRKARFDYFVLQEYDAGMVLVGSEVKSLRQRKVNMGDAYVLEKDMELWIHNLHISEYNRADRKNHKPLRVRKLLLRKREIHKIAGNIKVSGLAVVPLMIFFNNKGIAKIKIAIVKGKKLYDKREAIKTRDWQREKSRISRREV.

It belongs to the SmpB family.

It is found in the cytoplasm. Required for rescue of stalled ribosomes mediated by trans-translation. Binds to transfer-messenger RNA (tmRNA), required for stable association of tmRNA with ribosomes. tmRNA and SmpB together mimic tRNA shape, replacing the anticodon stem-loop with SmpB. tmRNA is encoded by the ssrA gene; the 2 termini fold to resemble tRNA(Ala) and it encodes a 'tag peptide', a short internal open reading frame. During trans-translation Ala-aminoacylated tmRNA acts like a tRNA, entering the A-site of stalled ribosomes, displacing the stalled mRNA. The ribosome then switches to translate the ORF on the tmRNA; the nascent peptide is terminated with the 'tag peptide' encoded by the tmRNA and targeted for degradation. The ribosome is freed to recommence translation, which seems to be the essential function of trans-translation. In Anaplasma marginale (strain St. Maries), this protein is SsrA-binding protein.